The following is a 531-amino-acid chain: Plant UBX domain-containing protein 11 (531 aa).

At Met1 the chain carries N-acetylmethionine. Residues 160–173 (AVASPSTASSVQPS) are compositionally biased toward low complexity. 2 disordered regions span residues 160-316 (AVAS…KASD) and 441-531 (ANAS…NDRR). Composition is skewed to polar residues over residues 174-190 (ETKS…NNDG) and 201-214 (EPSN…NQPA). Positions 290–301 (VDTKETMKPKDE) are enriched in basic and acidic residues. Residues 312–390 (KKASDVHLNI…RLFDRQALVV (79 aa)) enclose the UBX domain. Polar residues-rich tracts occupy residues 441 to 478 (ANAS…GRSN) and 486 to 496 (TSRIGSNIHTL).

As to quaternary structure, interacts with CDC48A.

The sequence is that of Plant UBX domain-containing protein 11 from Arabidopsis thaliana (Mouse-ear cress).